We begin with the raw amino-acid sequence, 123 residues long: MPTIQQLIRNTRQPTQNRTKSPALKACPQRRGVCTRVYTTTPKKPNSALRKVARVRLTSGFEVTAYIPGIGHNLQEHSVVLIRGGRVKDLPGVRYHIIRGTLDAVGVKDRHQGRSKYGVKRPK.

A compositionally biased stretch (polar residues) spans 1–20 (MPTIQQLIRNTRQPTQNRTK). The tract at residues 1-27 (MPTIQQLIRNTRQPTQNRTKSPALKAC) is disordered.

It belongs to the universal ribosomal protein uS12 family. In terms of assembly, part of the 30S ribosomal subunit.

It localises to the plastid. The protein resides in the chloroplast. With S4 and S5 plays an important role in translational accuracy. Located at the interface of the 30S and 50S subunits. The polypeptide is Small ribosomal subunit protein uS12c (rps12) (Zygnema circumcarinatum (Green alga)).